A 177-amino-acid polypeptide reads, in one-letter code: NAD(P)H-quinone oxidoreductase subunit 6, chloroplastic (177 aa).

The next 5 helical transmembrane spans lie at isoleucine 10–threonine 30, proline 32–proline 52, alanine 61–methionine 81, phenylalanine 92–isoleucine 112, and phenylalanine 152–alanine 172.

It belongs to the complex I subunit 6 family. NDH is composed of at least 16 different subunits, 5 of which are encoded in the nucleus.

It localises to the plastid. The protein resides in the chloroplast thylakoid membrane. It carries out the reaction a plastoquinone + NADH + (n+1) H(+)(in) = a plastoquinol + NAD(+) + n H(+)(out). The catalysed reaction is a plastoquinone + NADPH + (n+1) H(+)(in) = a plastoquinol + NADP(+) + n H(+)(out). In terms of biological role, NDH shuttles electrons from NAD(P)H:plastoquinone, via FMN and iron-sulfur (Fe-S) centers, to quinones in the photosynthetic chain and possibly in a chloroplast respiratory chain. The immediate electron acceptor for the enzyme in this species is believed to be plastoquinone. Couples the redox reaction to proton translocation, and thus conserves the redox energy in a proton gradient. The polypeptide is NAD(P)H-quinone oxidoreductase subunit 6, chloroplastic (ndhG) (Nuphar advena (Common spatterdock)).